A 606-amino-acid polypeptide reads, in one-letter code: Albumin A (606 aa).

The first 18 residues, 1–18, serve as a signal peptide directing secretion; the sequence is MKWITLICLLISSTLIES. Residues 19–24 constitute a propeptide that is removed on maturation; it reads RIIFKR. Albumin domains are found at residues 22 to 211, 212 to 401, and 402 to 599; these read FKRD…ELMK, HSHS…RFMN, and EAKE…VLIE. His30 lines the Cu cation pocket. Disulfide bonds link Cys80–Cys89, Cys102–Cys118, Cys117–Cys128, Cys148–Cys193, Cys192–Cys201, Cys224–Cys270, Cys269–Cys277, Cys289–Cys303, Cys302–Cys313, Cys340–Cys383, Cys382–Cys391, Cys414–Cys460, Cys459–Cys470, Cys483–Cys499, Cys498–Cys509, Cys536–Cys581, and Cys580–Cys589.

The protein belongs to the ALB/AFP/VDB family. As to expression, plasma.

The protein localises to the secreted. Functionally, binds water, Ca(2+), Na(+), K(+), fatty acids, hormones, bilirubin and drugs. Its main function is the regulation of the colloidal osmotic pressure of blood. The polypeptide is Albumin A (alb-a) (Xenopus laevis (African clawed frog)).